The following is a 353-amino-acid chain: Photosystem II D2 protein (353 aa).

N-acetylthreonine is present on T2. T2 carries the post-translational modification Phosphothreonine. The helical transmembrane segment at 41-61 (CAYFAVGGWFTGTTFVTSWYT) threads the bilayer. H118 is a binding site for chlorophyll a. The chain crosses the membrane as a helical span at residues 125 to 141 (GFMLRQFELARSVQLRP). Q130 and N143 together coordinate pheophytin a. Residues 153 to 166 (VFVSVFLIYPLGQS) form a helical membrane-spanning segment. H198 contributes to the chlorophyll a binding site. Residues 208 to 228 (AALLCAIHGATVENTLFEDGD) form a helical membrane-spanning segment. Residues H215 and F262 each coordinate a plastoquinone. Position 215 (H215) interacts with Fe cation. H269 provides a ligand contact to Fe cation. Residues 279–295 (GLWMSALGVVGLALNLR) form a helical membrane-spanning segment.

This sequence belongs to the reaction center PufL/M/PsbA/D family. In terms of assembly, PSII is composed of 1 copy each of membrane proteins PsbA, PsbB, PsbC, PsbD, PsbE, PsbF, PsbH, PsbI, PsbJ, PsbK, PsbL, PsbM, PsbT, PsbX, PsbY, PsbZ, Psb30/Ycf12, at least 3 peripheral proteins of the oxygen-evolving complex and a large number of cofactors. It forms dimeric complexes. The D1/D2 heterodimer binds P680, chlorophylls that are the primary electron donor of PSII, and subsequent electron acceptors. It shares a non-heme iron and each subunit binds pheophytin, quinone, additional chlorophylls, carotenoids and lipids. There is also a Cl(-1) ion associated with D1 and D2, which is required for oxygen evolution. The PSII complex binds additional chlorophylls, carotenoids and specific lipids. is required as a cofactor.

It is found in the plastid. The protein resides in the chloroplast thylakoid membrane. It catalyses the reaction 2 a plastoquinone + 4 hnu + 2 H2O = 2 a plastoquinol + O2. Functionally, photosystem II (PSII) is a light-driven water:plastoquinone oxidoreductase that uses light energy to abstract electrons from H(2)O, generating O(2) and a proton gradient subsequently used for ATP formation. It consists of a core antenna complex that captures photons, and an electron transfer chain that converts photonic excitation into a charge separation. The D1/D2 (PsbA/PsbD) reaction center heterodimer binds P680, the primary electron donor of PSII as well as several subsequent electron acceptors. D2 is needed for assembly of a stable PSII complex. The protein is Photosystem II D2 protein of Cucumis sativus (Cucumber).